Reading from the N-terminus, the 324-residue chain is Mevalonate-3-kinase (324 aa).

Substrate is bound at residue Leu19. 109 to 112 (SGSS) is a binding site for ATP. The substrate site is built by Glu145 and Arg149. Arg190 and Ser193 together coordinate ATP.

It belongs to the GHMP kinase family. As to quaternary structure, homodimer.

It catalyses the reaction (R)-mevalonate + ATP = (R)-3-phosphomevalonate + ADP + H(+). The protein operates within isoprenoid biosynthesis; isopentenyl diphosphate biosynthesis via mevalonate pathway. Functionally, catalyzes the phosphorylation of mevalonate (MVA) to yield mevalonate-3-phosphate. Functions in an alternative mevalonate pathway, which passes through mevalonate 3-phosphate rather than mevalonate 5-phosphate. Also able to catalyze the formation of isobutene via the conversion of 3-hydroxyisovalerate (3-HIV) to an unstable 3-phosphate intermediate that undergoes a spontaneous decarboxylation. The protein is Mevalonate-3-kinase of Picrophilus torridus (strain ATCC 700027 / DSM 9790 / JCM 10055 / NBRC 100828 / KAW 2/3).